We begin with the raw amino-acid sequence, 139 residues long: Envelope glycoprotein N (139 aa).

Residues 1 to 100 (MACGKTESGD…CHSHFYGLSV (100 aa)) lie on the Virion surface side of the membrane. Residues 101–121 (SSFASIWMMVNAIVFICAFGV) form a helical membrane-spanning segment. Residues 122-139 (FMRHWCYKAFTSDTAKGY) lie on the Intravirion side of the membrane.

Belongs to the herpesviridae glycoprotein N family. In terms of assembly, interacts (via N-terminus) with gM (via N-terminus). The gM-gN heterodimer forms the gCII complex.

Its subcellular location is the virion membrane. It localises to the host membrane. The protein localises to the host Golgi apparatus. The protein resides in the host trans-Golgi network. Its function is as follows. Envelope glycoprotein necessary for proper maturation of gM and modulation of its membrane fusion activity. Also plays a critical role in virion morphogenesis. This Mus musculus (Mouse) protein is Envelope glycoprotein N.